Reading from the N-terminus, the 592-residue chain is K(+) efflux antiporter 4 (592 aa).

An N-terminal signal peptide occupies residues 1 to 35 (MRRCKNNTDKFSVITMRLLTLLLICTFFFFFSFAY). The next 12 helical transmembrane spans lie at 169 to 189 (LISDLVVVIVSATCGGIAFAC), 193 to 213 (PVITGYLLAGSIIGPGGLSFV), 221 to 241 (TVAQFGVIFLLFALGLEFSAA), 248 to 268 (AVAIPGGLLQIFLFMCLSGIT), 279 to 299 (GIFVGAFLSMSSTAVVLKFLM), 313 to 333 (VGTLILQDCAVGLLFALLPVL), 343 to 363 (VLSMAKSLAILIAFLGALFVL), 388 to 408 (LAAVAFCLLVAWCSDKLGLSL), 437 to 457 (NFFAALFLASIGMLIHMHFLW), 462 to 482 (ILLAAVLLVIVIKTVVVAIVV), 491 to 511 (TAVLVGMSLAQIGEFAFVLLS), and 535 to 555 (LVTTPLLFKLIPAVVHLGVLL).

It belongs to the monovalent cation:proton antiporter 2 (CPA2) transporter (TC 2.A.37) family. KEA (TC 2.A.37.1) subfamily. Expressed in roots, stems, leaves, flowers and silique.

The protein localises to the golgi apparatus membrane. It is found in the golgi apparatus. It localises to the trans-Golgi network membrane. The protein resides in the prevacuolar compartment membrane. Its subcellular location is the endomembrane system. The catalysed reaction is K(+)(in) + H(+)(out) = K(+)(out) + H(+)(in). In terms of biological role, electroneutral K(+)/H(+) efflux antiporter involved in K(+) homeostasis and osmotic adjustment. Together with KEA5 and KEA6, promotes growth and development, and facilitates endosomal pH and ions homeostasis, as well as salt tolerance (e.g. K(+), NaCl and LiCl), probably by supporting cell wall biosynthesis during rapid etiolated seedling growth. This Arabidopsis thaliana (Mouse-ear cress) protein is K(+) efflux antiporter 4.